We begin with the raw amino-acid sequence, 180 residues long: Tubulin polymerization-promoting protein homolog (180 aa).

Basic and acidic residues-rich tracts occupy residues 136–158 (TGAHKERFDAEGKGKGKSGRADT) and 169–180 (KNKDSYDKTHGK). The tract at residues 136–180 (TGAHKERFDAEGKGKGKSGRADTTENTGYVGAYKNKDSYDKTHGK) is disordered.

It belongs to the TPPP family.

Functionally, regulator of microtubule dynamics. The chain is Tubulin polymerization-promoting protein homolog from Caenorhabditis elegans.